A 341-amino-acid chain; its full sequence is tRNA N6-adenosine threonylcarbamoyltransferase (341 aa).

Positions 111 and 115 each coordinate Fe cation. Residues 134-138 (LVSGG), Asp-167, Gly-180, and Asn-276 each bind substrate. Residue Asp-304 coordinates Fe cation.

This sequence belongs to the KAE1 / TsaD family. Requires Fe(2+) as cofactor.

The protein localises to the cytoplasm. It catalyses the reaction L-threonylcarbamoyladenylate + adenosine(37) in tRNA = N(6)-L-threonylcarbamoyladenosine(37) in tRNA + AMP + H(+). Its function is as follows. Required for the formation of a threonylcarbamoyl group on adenosine at position 37 (t(6)A37) in tRNAs that read codons beginning with adenine. Is involved in the transfer of the threonylcarbamoyl moiety of threonylcarbamoyl-AMP (TC-AMP) to the N6 group of A37, together with TsaE and TsaB. TsaD likely plays a direct catalytic role in this reaction. The protein is tRNA N6-adenosine threonylcarbamoyltransferase of Pseudomonas aeruginosa (strain UCBPP-PA14).